The chain runs to 336 residues: Tetraacyldisaccharide 4'-kinase (336 aa).

Position 60-67 (60-67) interacts with ATP; sequence TVGGTGKT.

The protein belongs to the LpxK family.

The catalysed reaction is a lipid A disaccharide + ATP = a lipid IVA + ADP + H(+). It participates in glycolipid biosynthesis; lipid IV(A) biosynthesis; lipid IV(A) from (3R)-3-hydroxytetradecanoyl-[acyl-carrier-protein] and UDP-N-acetyl-alpha-D-glucosamine: step 6/6. Its function is as follows. Transfers the gamma-phosphate of ATP to the 4'-position of a tetraacyldisaccharide 1-phosphate intermediate (termed DS-1-P) to form tetraacyldisaccharide 1,4'-bis-phosphate (lipid IVA). The protein is Tetraacyldisaccharide 4'-kinase of Pseudomonas fluorescens (strain Pf0-1).